The primary structure comprises 230 residues: Sperm-associated antigen 7 homolog (230 aa).

The interval 1-45 is disordered; that stretch reads MADLLGSILSSMEKPPTVHDQESRRKAREQAARLKKLEEDERRKK. Residues 16-45 show a composition bias toward basic and acidic residues; the sequence is PTVHDQESRRKAREQAARLKKLEEDERRKK. The 64-residue stretch at 46–109 folds into the R3H domain; sequence AEFRKKMEKE…ESRYVMLFKK (64 aa). The span at 119–144 shows a compositional bias: basic and acidic residues; sequence EAYRKGEEWDPQKAEERRRLKEKAAL. Disordered regions lie at residues 119–169 and 185–230; these read EAYR…KYSH and ANRA…GSSV. Residue S158 is modified to Phosphoserine. Basic and acidic residues predominate over residues 196–211; the sequence is NKRDTRSIEEAMNEIR.

This Danio rerio (Zebrafish) protein is Sperm-associated antigen 7 homolog (spag7).